Here is an 879-residue protein sequence, read N- to C-terminus: MSSSQAVRSSKYSYRATSTGPGTADVNIEYIQDLSSLSRLEDKIRLLQDDLEVERELRQRIEREKADLSVQVIQMSERLEEAEGGAEHQFEANRKRDAELLKLRKLLEDVHLESEETTLLLKKKHNEIITDFQEQVEILTKNKARAEKDKAKFQTEVYELLSQIESYNKEKIVSEKHISKLEVSISELNVKIEELNRTVIDISSHRSRLSQENIELTKDVQDLKVQLDTVSFSKSQVISQLEDARRRLEDEDRRRSLLESSLHQVEIELDSVRNQLEEESEARIDLERQLVKANADATSWQNKWNSEVAARAEEVEEIRRKYQVRITELEEHIESLIVKVNNLEKMKTRLASEVEVLIIDLEKSNNSCRELTKSVNTLEKHNVELKSRLDETIILYETSQRDLKNKHADLVRTVHELDKVKDNNNQLTRENKKLGDDLHEAKGAINELNRRLHELELELRRLENERDELTAAYKEAEAGRKAEEQRGQRLAADFNQYRHDAERRLAEKDEEIEAIRKQTSIEIEQLNARVIEAETRLKTEVTRIKKKLQIQITELEMSLDVANKTNIDLQKVIKKQSLQLTELQAHYEDVQRQLQATLDQYAVAQRRLAGLNGELEEVRSHLDSANRAKRTVELQYEEAASRINELTTANVSLVSIKSKLEQELSVVASDYEEVSKELRISDERYQKVQVELKHVVEQVHEEQERIVKLETIKKSLEVEVKNLSIRLEEVELNAVAGSKRIISKLEARIRDLELELEEEKRRHAETIKILRKKERTVKEVLVQCEEDQKNLILLQDALDKSTAKINIYRRQLSEQEGVSQQTTTRVRRFQRELEAAEDRADTAESSLNIIRAKHRTFVTTSTVPGSQVYIQETTRTITE.

The nonhelical region stretch occupies residues 1 to 31 (MSSSQAVRSSKYSYRATSTGPGTADVNIEYI). Ser18 is subject to Phosphoserine. Residues 32-858 (QDLSSLSRLE…IIRAKHRTFV (827 aa)) adopt a coiled-coil conformation. Residues 859–879 (TTSTVPGSQVYIQETTRTITE) are nonhelical region.

It belongs to the paramyosin family. In terms of assembly, heterodimer of two isoforms. The more-acidic and less-abundant isoform is phosphorylated. Expressed in all larval and adult muscle tissues. Expression is five times higher in tubular than in fibrillar muscles.

The protein localises to the cytoplasm. The protein resides in the myofibril. In terms of biological role, paramyosin is a major structural component of many thick filaments isolated from invertebrate muscles. This is Paramyosin, long form (Prm) from Drosophila melanogaster (Fruit fly).